Reading from the N-terminus, the 227-residue chain is LexA repressor (227 aa).

The segment at residues 25 to 45 is a DNA-binding region (H-T-H motif); that stretch reads FDEMKDALDLRSKSGIHRLIT. Residues Ser148 and Lys186 each act as for autocatalytic cleavage activity in the active site.

The protein belongs to the peptidase S24 family. As to quaternary structure, homodimer.

The catalysed reaction is Hydrolysis of Ala-|-Gly bond in repressor LexA.. Functionally, represses a number of genes involved in the response to DNA damage (SOS response), including recA and lexA. In the presence of single-stranded DNA, RecA interacts with LexA causing an autocatalytic cleavage which disrupts the DNA-binding part of LexA, leading to derepression of the SOS regulon and eventually DNA repair. This Cereibacter sphaeroides (strain ATCC 17029 / ATH 2.4.9) (Rhodobacter sphaeroides) protein is LexA repressor.